A 217-amino-acid polypeptide reads, in one-letter code: MQFSSSARTVDENFDYLFKIILIGDSNVGKTCVVQHFKSGVYMEAQQNTIGVDFTVRALEIDGKKVKMQVWDTAGQERFRTITQSYYRSAHAAIIAYDLTRRSTFESVPHWIHEIEKYGAANLVIMLIGNKCDLWEKRHVLFEDACILAEKYGLLAVLETSAKESKNIDEVFVLMARELMARHSLPLYGEGAPGSLPLESTPVLMAPAPREKNQCTC.

Residues Ser-26, Val-28, Gly-29, Lys-30, Thr-31, Cys-32, Tyr-42, Glu-44, and Thr-49 each contribute to the GTP site. Position 31 (Thr-31) interacts with Mg(2+). Residues 39–54 (SGVYMEAQQNTIGVDF) carry the Switch 1 motif. Mg(2+) is bound by residues Thr-49 and Asp-72. The Switch 2 motif lies at 74-89 (AGQERFRTITQSYYRS). Residues Gly-75, Asn-130, Lys-131, Asp-133, Ser-161, Ala-162, and Lys-163 each coordinate GTP. Residues Cys-215 and Cys-217 are each lipidated (S-geranylgeranyl cysteine). Cys-217 carries the post-translational modification Cysteine methyl ester.

The protein belongs to the small GTPase superfamily. Rab family. Mg(2+) is required as a cofactor.

It localises to the cell membrane. It catalyses the reaction GTP + H2O = GDP + phosphate + H(+). Its activity is regulated as follows. Regulated by guanine nucleotide exchange factors (GEFs) which promote the exchange of bound GDP for free GTP. Regulated by GTPase activating proteins (GAPs) which increase the GTP hydrolysis activity. Inhibited by GDP dissociation inhibitors (GDIs). The small GTPases Rab are key regulators of intracellular membrane trafficking, from the formation of transport vesicles to their fusion with membranes. Rabs cycle between an inactive GDP-bound form and an active GTP-bound form that is able to recruit to membranes different set of downstream effectors directly responsible for vesicle formation, movement, tethering and fusion. The protein is Ras-related protein Rab-19 (RAB19) of Bos taurus (Bovine).